A 939-amino-acid polypeptide reads, in one-letter code: Translation initiation factor IF-2 (939 aa).

Residues 57-274 (RLKPAAPAAP…APTKKNEQKI (218 aa)) are disordered. Basic and acidic residues-rich tracts occupy residues 83 to 122 (MEPKEEPQKEVKESVKEAPESLPESPKEEAFEAEIPKESV) and 129 to 138 (LEQEPPKEEL). 2 stretches are compositionally biased toward polar residues: residues 146 to 158 (ESASETLSDSNPL) and 170 to 180 (VATTLATQTDA). Basic and acidic residues predominate over residues 208–227 (KRSEEPAPKADRPSLEEART). Positions 252-262 (ARKKKKEKKKP) are enriched in basic residues. The 170-residue stretch at 438-607 (ERPPVVTIMG…LVQSELLELK (170 aa)) folds into the tr-type G domain. Residues 447–454 (GHVDHGKT) form a G1 region. 447–454 (GHVDHGKT) provides a ligand contact to GTP. Positions 472-476 (GITQH) are G2. The segment at 493-496 (DTPG) is G3. Residues 493–497 (DTPGH) and 547–550 (NKVD) each bind GTP. A G4 region spans residues 547-550 (NKVD). Residues 583 to 585 (SAK) form a G5 region.

The protein belongs to the TRAFAC class translation factor GTPase superfamily. Classic translation factor GTPase family. IF-2 subfamily.

It localises to the cytoplasm. Its function is as follows. One of the essential components for the initiation of protein synthesis. Protects formylmethionyl-tRNA from spontaneous hydrolysis and promotes its binding to the 30S ribosomal subunits. Also involved in the hydrolysis of GTP during the formation of the 70S ribosomal complex. This Wolinella succinogenes (strain ATCC 29543 / DSM 1740 / CCUG 13145 / JCM 31913 / LMG 7466 / NCTC 11488 / FDC 602W) (Vibrio succinogenes) protein is Translation initiation factor IF-2.